A 176-amino-acid polypeptide reads, in one-letter code: NAD(P)H-quinone oxidoreductase subunit J (176 aa).

Residues 1 to 32 (MEKEGLAKSSDTSIKKEGFISQSLSKDGIPNQ) form a disordered region. Residues 20–32 (ISQSLSKDGIPNQ) show a composition bias toward polar residues.

It belongs to the complex I 30 kDa subunit family. NDH-1 can be composed of about 15 different subunits; different subcomplexes with different compositions have been identified which probably have different functions.

The protein localises to the cellular thylakoid membrane. The enzyme catalyses a plastoquinone + NADH + (n+1) H(+)(in) = a plastoquinol + NAD(+) + n H(+)(out). The catalysed reaction is a plastoquinone + NADPH + (n+1) H(+)(in) = a plastoquinol + NADP(+) + n H(+)(out). In terms of biological role, NDH-1 shuttles electrons from an unknown electron donor, via FMN and iron-sulfur (Fe-S) centers, to quinones in the respiratory and/or the photosynthetic chain. The immediate electron acceptor for the enzyme in this species is believed to be plastoquinone. Couples the redox reaction to proton translocation, and thus conserves the redox energy in a proton gradient. Cyanobacterial NDH-1 also plays a role in inorganic carbon-concentration. This chain is NAD(P)H-quinone oxidoreductase subunit J, found in Prochlorococcus marinus (strain MIT 9215).